Here is a 93-residue protein sequence, read N- to C-terminus: Small ribosomal subunit protein uS19 (93 aa).

The protein belongs to the universal ribosomal protein uS19 family.

In terms of biological role, protein S19 forms a complex with S13 that binds strongly to the 16S ribosomal RNA. This chain is Small ribosomal subunit protein uS19, found in Cutibacterium acnes (strain DSM 16379 / KPA171202) (Propionibacterium acnes).